Reading from the N-terminus, the 234-residue chain is Phosphoribosylaminoimidazole-succinocarboxamide synthase (234 aa).

It belongs to the SAICAR synthetase family.

It catalyses the reaction 5-amino-1-(5-phospho-D-ribosyl)imidazole-4-carboxylate + L-aspartate + ATP = (2S)-2-[5-amino-1-(5-phospho-beta-D-ribosyl)imidazole-4-carboxamido]succinate + ADP + phosphate + 2 H(+). It functions in the pathway purine metabolism; IMP biosynthesis via de novo pathway; 5-amino-1-(5-phospho-D-ribosyl)imidazole-4-carboxamide from 5-amino-1-(5-phospho-D-ribosyl)imidazole-4-carboxylate: step 1/2. In Streptococcus pyogenes serotype M1, this protein is Phosphoribosylaminoimidazole-succinocarboxamide synthase.